A 197-amino-acid chain; its full sequence is Protein-methionine-sulfoxide reductase heme-binding subunit MsrQ (197 aa).

A run of 6 helical transmembrane segments spans residues 10–30 (IFIV…MNLL), 42–62 (LGLG…LQKL), 75–95 (LGLW…FFIL), 110–130 (PYII…VTSN), 147–167 (LVYA…RSDL), and 169–189 (EWAI…PAVA).

This sequence belongs to the MsrQ family. Heterodimer of a catalytic subunit (MsrP) and a heme-binding subunit (MsrQ). FMN is required as a cofactor. The cofactor is heme b.

Its subcellular location is the cell inner membrane. Its function is as follows. Part of the MsrPQ system that repairs oxidized periplasmic proteins containing methionine sulfoxide residues (Met-O), using respiratory chain electrons. Thus protects these proteins from oxidative-stress damage caused by reactive species of oxygen and chlorine generated by the host defense mechanisms. MsrPQ is essential for the maintenance of envelope integrity under bleach stress, rescuing a wide series of structurally unrelated periplasmic proteins from methionine oxidation. MsrQ provides electrons for reduction to the reductase catalytic subunit MsrP, using the quinone pool of the respiratory chain. In Pseudomonas putida (strain ATCC 47054 / DSM 6125 / CFBP 8728 / NCIMB 11950 / KT2440), this protein is Protein-methionine-sulfoxide reductase heme-binding subunit MsrQ.